We begin with the raw amino-acid sequence, 179 residues long: Large ribosomal subunit protein uL6 (179 aa).

It belongs to the universal ribosomal protein uL6 family. Part of the 50S ribosomal subunit.

This protein binds to the 23S rRNA, and is important in its secondary structure. It is located near the subunit interface in the base of the L7/L12 stalk, and near the tRNA binding site of the peptidyltransferase center. The chain is Large ribosomal subunit protein uL6 from Pelobacter propionicus (strain DSM 2379 / NBRC 103807 / OttBd1).